The primary structure comprises 259 residues: Imidazole glycerol phosphate synthase subunit HisF (259 aa).

Active-site residues include D11 and D130.

This sequence belongs to the HisA/HisF family. As to quaternary structure, heterodimer of HisH and HisF.

It is found in the cytoplasm. The catalysed reaction is 5-[(5-phospho-1-deoxy-D-ribulos-1-ylimino)methylamino]-1-(5-phospho-beta-D-ribosyl)imidazole-4-carboxamide + L-glutamine = D-erythro-1-(imidazol-4-yl)glycerol 3-phosphate + 5-amino-1-(5-phospho-beta-D-ribosyl)imidazole-4-carboxamide + L-glutamate + H(+). Its pathway is amino-acid biosynthesis; L-histidine biosynthesis; L-histidine from 5-phospho-alpha-D-ribose 1-diphosphate: step 5/9. In terms of biological role, IGPS catalyzes the conversion of PRFAR and glutamine to IGP, AICAR and glutamate. The HisF subunit catalyzes the cyclization activity that produces IGP and AICAR from PRFAR using the ammonia provided by the HisH subunit. This Syntrophobacter fumaroxidans (strain DSM 10017 / MPOB) protein is Imidazole glycerol phosphate synthase subunit HisF.